The sequence spans 137 residues: Small heat shock protein IbpA (137 aa).

Residues 28–137 (SQSNGGYPPY…ANKPRRIEIN (110 aa)) form the sHSP domain.

It belongs to the small heat shock protein (HSP20) family. As to quaternary structure, monomer. Forms homomultimers of about 100-150 subunits at optimal growth temperatures. Conformation changes to monomers at high temperatures or high ionic concentrations.

Its subcellular location is the cytoplasm. In terms of biological role, associates with aggregated proteins, together with IbpB, to stabilize and protect them from irreversible denaturation and extensive proteolysis during heat shock and oxidative stress. Aggregated proteins bound to the IbpAB complex are more efficiently refolded and reactivated by the ATP-dependent chaperone systems ClpB and DnaK/DnaJ/GrpE. Its activity is ATP-independent. In Citrobacter koseri (strain ATCC BAA-895 / CDC 4225-83 / SGSC4696), this protein is Small heat shock protein IbpA.